We begin with the raw amino-acid sequence, 571 residues long: Putative pyruvate decarboxylase C13A11.06 (571 aa).

Positions 29 and 118 each coordinate pyruvate. Thiamine diphosphate contacts are provided by residues Thr395 and 418-420; that span reads GSI. A Mg(2+)-binding site is contributed by Asp450. Residues 451–452 and 477–482 contribute to the thiamine diphosphate site; these read GS and NDGYTI. Positions 477 and 479 each coordinate Mg(2+). Position 483 (Glu483) interacts with pyruvate.

It belongs to the TPP enzyme family. In terms of assembly, homotetramer. It depends on Mg(2+) as a cofactor. Requires thiamine diphosphate as cofactor.

The enzyme catalyses a 2-oxocarboxylate + H(+) = an aldehyde + CO2. The catalysed reaction is pyruvate + H(+) = acetaldehyde + CO2. The protein is Putative pyruvate decarboxylase C13A11.06 of Schizosaccharomyces pombe (strain 972 / ATCC 24843) (Fission yeast).